Here is a 561-residue protein sequence, read N- to C-terminus: Oxygen-dependent choline dehydrogenase (561 aa).

6–35 (DYIIIGAGSAGNVLATRLTEDADVSVLLLE) is a binding site for FAD. The active-site Proton acceptor is the His475.

Belongs to the GMC oxidoreductase family. The cofactor is FAD.

It carries out the reaction choline + A = betaine aldehyde + AH2. The enzyme catalyses betaine aldehyde + NAD(+) + H2O = glycine betaine + NADH + 2 H(+). The protein operates within amine and polyamine biosynthesis; betaine biosynthesis via choline pathway; betaine aldehyde from choline (cytochrome c reductase route): step 1/1. In terms of biological role, involved in the biosynthesis of the osmoprotectant glycine betaine. Catalyzes the oxidation of choline to betaine aldehyde and betaine aldehyde to glycine betaine at the same rate. The sequence is that of Oxygen-dependent choline dehydrogenase from Pseudomonas aeruginosa (strain LESB58).